The primary structure comprises 350 residues: N-acetyl-gamma-glutamyl-phosphate reductase (350 aa).

The active site involves cysteine 153.

The protein belongs to the NAGSA dehydrogenase family. Type 1 subfamily.

The protein resides in the cytoplasm. It catalyses the reaction N-acetyl-L-glutamate 5-semialdehyde + phosphate + NADP(+) = N-acetyl-L-glutamyl 5-phosphate + NADPH + H(+). The protein operates within amino-acid biosynthesis; L-arginine biosynthesis; N(2)-acetyl-L-ornithine from L-glutamate: step 3/4. Catalyzes the NADPH-dependent reduction of N-acetyl-5-glutamyl phosphate to yield N-acetyl-L-glutamate 5-semialdehyde. This is N-acetyl-gamma-glutamyl-phosphate reductase from Gloeobacter violaceus (strain ATCC 29082 / PCC 7421).